The chain runs to 212 residues: Methylthioribulose-1-phosphate dehydratase (212 aa).

Residues histidine 97 and histidine 99 each coordinate Zn(2+).

The protein belongs to the aldolase class II family. MtnB subfamily. In terms of assembly, homotetramer. Zn(2+) serves as cofactor.

The enzyme catalyses 5-(methylsulfanyl)-D-ribulose 1-phosphate = 5-methylsulfanyl-2,3-dioxopentyl phosphate + H2O. The protein operates within amino-acid biosynthesis; L-methionine biosynthesis via salvage pathway; L-methionine from S-methyl-5-thio-alpha-D-ribose 1-phosphate: step 2/6. Catalyzes the dehydration of methylthioribulose-1-phosphate (MTRu-1-P) into 2,3-diketo-5-methylthiopentyl-1-phosphate (DK-MTP-1-P). In Bacillus thuringiensis subsp. konkukian (strain 97-27), this protein is Methylthioribulose-1-phosphate dehydratase.